Here is an 88-residue protein sequence, read N- to C-terminus: uncharacterized protein (88 aa).

This is an uncharacterized protein from Banana bunchy top virus (isolate Autralia) (BBTV).